Reading from the N-terminus, the 340-residue chain is HTH-type transcriptional regulator PtxS (340 aa).

The region spanning 12 to 67 (VTINQVAEAAGVSKASVSRYIGGDRQLLADATARRIERAIDQLDYRPNQMARGLKR) is the HTH lacI-type domain. The segment at residues 14-33 (INQVAEAAGVSKASVSRYIG) is a DNA-binding region (H-T-H motif).

As to quaternary structure, interacts with PtxR in the absence of 2-ketogluconate. Binding of the 2-ketogluconate effector to PtxS causes PtxS/PtxR complex dissociation.

Its activity is regulated as follows. 2-ketogluconate acts as a molecular effector and causes dissociation of the PtxS/PtxR complex. Negatively regulates glucose metabolism by binding directly to the promoter region of the kgu and gad operons. It also negatively regulates its own synthesis. Its function is as follows. In addition, in pathogenic strains, PtxS modulates PtxR activity in response to 2-ketogluconate. In the presence of PtxR, which also binds to the kgu and gad promoter regions, PtxS and PtxR form a tight complex, creating a DNA-loop that prevents RNA polymerase promoter access and expression of the glucose metabolism genes. Binding of the 2-ketogluconate effector to PtxS causes PtxS/PtxR complex dissociation and leads to the dissolution of the repression DNA-loop, facilitating the entry of the RNA polymerase and enabling the transcription of the genes. Also plays an important role in the regulation of the expression of the virulence factor exotoxin A (toxA). PtxS does not bind directly to the toxA promoter but negatively regulates the production of exotoxin A by binding to PtxR and interfering with its positive regulator activity. In the presence of 2-ketogluconate, PtxS is released and PtxR can recruit RNA polymerase. The protein is HTH-type transcriptional regulator PtxS of Pseudomonas aeruginosa (strain ATCC 15692 / DSM 22644 / CIP 104116 / JCM 14847 / LMG 12228 / 1C / PRS 101 / PAO1).